A 103-amino-acid chain; its full sequence is Large ribosomal subunit protein bL21 (103 aa).

Belongs to the bacterial ribosomal protein bL21 family. Part of the 50S ribosomal subunit. Contacts protein L20.

In terms of biological role, this protein binds to 23S rRNA in the presence of protein L20. This is Large ribosomal subunit protein bL21 from Rhodococcus erythropolis (strain PR4 / NBRC 100887).